Here is a 123-residue protein sequence, read N- to C-terminus: uncharacterized protein (123 aa).

Helical transmembrane passes span 53-73 (VWFL…FFFL) and 75-95 (VLWF…VFSH).

Its subcellular location is the membrane. This is an uncharacterized protein from Saccharomyces cerevisiae (strain ATCC 204508 / S288c) (Baker's yeast).